The chain runs to 302 residues: Coiled-coil domain-containing protein 2 (302 aa).

Positions 1–22 (MKNFGLLVVCLSLATLVIPSDG) are cleaved as a signal peptide. A coiled-coil region spans residues 198-234 (FADAMEKKAEALENAAEAAAEYISDQSEEVDDLSEEV). The interval 221-257 (SDQSEEVDDLSEEVLDDDSDENDSTSSESEVEDSDVD) is disordered. Positions 223-257 (QSEEVDDLSEEVLDDDSDENDSTSSESEVEDSDVD) are enriched in acidic residues. Asn-242 carries N-linked (GlcNAc...) asparagine glycosylation.

In terms of tissue distribution, component of the acid-insoluble organic matrix of calcified layers of the shell (at protein level).

The protein resides in the secreted. In Lottia gigantea (Giant owl limpet), this protein is Coiled-coil domain-containing protein 2.